Reading from the N-terminus, the 236-residue chain is Probable ascorbate-specific transmembrane electron transporter 2 (236 aa).

Over 1 to 11 (MAAGLGVKAAP) the chain is Cytoplasmic. A helical transmembrane segment spans residues 12–32 (FTYVAHALAVAAAVMVLVWCI). The 205-residue stretch at 15 to 219 (VAHALAVAAA…FGAAVVVAAV (205 aa)) folds into the Cytochrome b561 domain. Residues 33 to 53 (SFRGGLAFEADNKNLIFNVHP) lie on the Extracellular side of the membrane. H52 contacts heme b. The chain crosses the membrane as a helical span at residues 54–74 (VLMLIGYIILGSEAIMIYKIF). 67 to 75 (AIMIYKIFP) is a binding site for L-ascorbate. Topologically, residues 75-84 (PKLNHDTTKL) are cytoplasmic. The chain crosses the membrane as a helical span at residues 85 to 105 (IHLILHAIAIVLGAVGIYCAF). Heme b is bound by residues H86 and H120. Over 106 to 122 (KFHNESGIANLYSLHSW) the chain is Extracellular. 116–125 (LYSLHSWLGI) provides a ligand contact to monodehydro-L-ascorbate radical. Residues 123-143 (LGIGTISLYGIQWIFGFVAFF) traverse the membrane as a helical segment. Topologically, residues 144–153 (YPGAAPHVRR) are cytoplasmic. Residues 154 to 174 (GALPWHVLFGLFVYVLTLATA) form a helical membrane-spanning segment. Position 159 (H159) interacts with heme b. Residues 175–196 (ELGLLEKLTFLQSSGLDKYGAE) lie on the Extracellular side of the membrane. A helical transmembrane segment spans residues 197–217 (AFLVNFTGLVVALFGAAVVVA). Residues 218-236 (AVAPAHVEEPEGYAPIPVN) lie on the Cytoplasmic side of the membrane.

Heme b serves as cofactor.

The protein resides in the membrane. Its function is as follows. Two-heme-containing cytochrome. Catalyzes ascorbate-dependent trans-membrane electron transfer by utilizing a concerted H(+)/e(-) transfer mechanism. The protein is Probable ascorbate-specific transmembrane electron transporter 2 of Oryza sativa subsp. japonica (Rice).